The chain runs to 212 residues: Acyl-homoserine-lactone synthase (212 aa).

The protein belongs to the autoinducer synthase family.

It catalyses the reaction a fatty acyl-[ACP] + S-adenosyl-L-methionine = an N-acyl-L-homoserine lactone + S-methyl-5'-thioadenosine + holo-[ACP] + H(+). In terms of biological role, required for the synthesis of OHHL (N-(3-oxohexanoyl)-L-homoserine lactone), an autoinducer molecule which binds to the EchR transcriptional regulator. The protein is Acyl-homoserine-lactone synthase (echI) of Dickeya chrysanthemi (Pectobacterium chrysanthemi).